Reading from the N-terminus, the 204-residue chain is Large ribosomal subunit protein eL15 (204 aa).

Belongs to the eukaryotic ribosomal protein eL15 family. Component of the large ribosomal subunit.

It localises to the cytoplasm. Component of the large ribosomal subunit. The ribosome is a large ribonucleoprotein complex responsible for the synthesis of proteins in the cell. In Paramisgurnus dabryanus, this protein is Large ribosomal subunit protein eL15 (rpl15).